Consider the following 390-residue polypeptide: GTPase Obg (390 aa).

Residues 1-159 form the Obg domain; that stretch reads MKFVDEASIL…RDLMLELMLL (159 aa). The disordered stretch occupies residues 127-147; the sequence is NTRFKSSVNRTPRQKTMGTPG. A compositionally biased stretch (polar residues) spans 129-143; it reads RFKSSVNRTPRQKTM. The OBG-type G domain maps to 160–333; sequence ADVGMLGMPN…LCWDVMTFII (174 aa). Residues 166-173, 191-195, 213-216, 283-286, and 314-316 each bind GTP; these read GMPNAGKS, FTTLV, DIPG, NKID, and SAA. Mg(2+)-binding residues include Ser173 and Thr193.

The protein belongs to the TRAFAC class OBG-HflX-like GTPase superfamily. OBG GTPase family. Monomer. Mg(2+) is required as a cofactor.

The protein localises to the cytoplasm. Functionally, an essential GTPase which binds GTP, GDP and possibly (p)ppGpp with moderate affinity, with high nucleotide exchange rates and a fairly low GTP hydrolysis rate. Plays a role in control of the cell cycle, stress response, ribosome biogenesis and in those bacteria that undergo differentiation, in morphogenesis control. The polypeptide is GTPase Obg (Citrobacter koseri (strain ATCC BAA-895 / CDC 4225-83 / SGSC4696)).